We begin with the raw amino-acid sequence, 82 residues long: UPF0154 protein SMU_1719c (82 aa).

Residues 4–24 traverse the membrane as a helical segment; the sequence is FLWILLVIIALLAGLVGGTFI.

This sequence belongs to the UPF0154 family.

It is found in the membrane. This Streptococcus mutans serotype c (strain ATCC 700610 / UA159) protein is UPF0154 protein SMU_1719c.